The following is an 80-amino-acid chain: Raniseptin-8 (80 aa).

Positions 1-22 (MAFLKKSLFLVLFLGIVSLSIC) are cleaved as a signal peptide. The propeptide occupies 23–49 (EEEKREGEEEEKQEEENEELSEEELRE). A disordered region spans residues 27-46 (REGEEEEKQEEENEELSEEE). The span at 30 to 44 (EEEEKQEEENEELSE) shows a compositional bias: acidic residues.

This sequence belongs to the frog skin active peptide (FSAP) family. Dermaseptin subfamily. As to expression, expressed by the skin glands.

The protein resides in the secreted. Its function is as follows. Has antibacterial activity. In Boana raniceps (Chaco tree frog), this protein is Raniseptin-8.